The chain runs to 94 residues: Small ribosomal subunit protein uS19 (94 aa).

The protein belongs to the universal ribosomal protein uS19 family.

In terms of biological role, protein S19 forms a complex with S13 that binds strongly to the 16S ribosomal RNA. This is Small ribosomal subunit protein uS19 from Nitrosomonas eutropha (strain DSM 101675 / C91 / Nm57).